The primary structure comprises 284 residues: RNase adapter protein RapZ (284 aa).

ATP is bound at residue 8 to 15 (GRSGSGKS). 56-59 (DVRN) is a binding site for GTP. Residues 266-284 (RSRGKNVQSRHRTLEKRKS) are RNA-binding.

The protein belongs to the RapZ-like family. RapZ subfamily. Homotrimer.

Functionally, modulates the synthesis of GlmS, by affecting the processing and stability of the regulatory small RNA GlmZ. When glucosamine-6-phosphate (GlcN6P) concentrations are high in the cell, RapZ binds GlmZ and targets it to cleavage by RNase E. Consequently, GlmZ is inactivated and unable to activate GlmS synthesis. Under low GlcN6P concentrations, RapZ is sequestered and inactivated by an other regulatory small RNA, GlmY, preventing GlmZ degradation and leading to synthesis of GlmS. This chain is RNase adapter protein RapZ, found in Klebsiella pneumoniae (strain 342).